The primary structure comprises 201 residues: Riboflavin synthase (201 aa).

2 Lumazine-binding repeats span residues methionine 1–histidine 97 and isoleucine 98–methionine 197. Residues glycine 4–valine 6, cysteine 47–threonine 49, aspartate 62–threonine 67, glycine 101–valine 103, lysine 136, serine 145–threonine 147, and serine 162–threonine 167 contribute to the 2,4-dihydroxypteridine site.

As to quaternary structure, homotrimer.

It carries out the reaction 2 6,7-dimethyl-8-(1-D-ribityl)lumazine + H(+) = 5-amino-6-(D-ribitylamino)uracil + riboflavin. It functions in the pathway cofactor biosynthesis; riboflavin biosynthesis; riboflavin from 2-hydroxy-3-oxobutyl phosphate and 5-amino-6-(D-ribitylamino)uracil: step 2/2. Catalyzes the dismutation of two molecules of 6,7-dimethyl-8-ribityllumazine, resulting in the formation of riboflavin and 5-amino-6-(D-ribitylamino)uracil. This is Riboflavin synthase (ribE) from Mycobacterium bovis (strain ATCC BAA-935 / AF2122/97).